The sequence spans 972 residues: UvrABC system protein A (972 aa).

32–39 contributes to the ATP binding site; sequence GLSGSGKS. A C4-type; atypical zinc finger spans residues 257–285; the sequence is CPNGHALAVDDLEPRSFSFNSPYGACPEC. ABC transporter domains are found at residues 315-601 and 621-950; these read WSNG…KDSI and VDPR…KFLA. 654-661 contacts ATP; sequence GVSGSGKS. The C4-type zinc finger occupies 753 to 779; it reads CEACTGDGTIKIEMNFLPDVYVPCEVC.

The protein belongs to the ABC transporter superfamily. UvrA family. As to quaternary structure, forms a heterotetramer with UvrB during the search for lesions.

The protein localises to the cytoplasm. Functionally, the UvrABC repair system catalyzes the recognition and processing of DNA lesions. UvrA is an ATPase and a DNA-binding protein. A damage recognition complex composed of 2 UvrA and 2 UvrB subunits scans DNA for abnormalities. When the presence of a lesion has been verified by UvrB, the UvrA molecules dissociate. The protein is UvrABC system protein A of Mycobacterium bovis (strain ATCC BAA-935 / AF2122/97).